The chain runs to 271 residues: Transmembrane protein 150A (271 aa).

The Cytoplasmic segment spans residues 1–2 (MT). A helical transmembrane segment spans residues 3–23 (AWILLPVSLSAFSITGIWTVY). The Extracellular portion of the chain corresponds to 24–75 (AMAVMNRHVCPVENWSYNESCSPDPAEQGGPKSCCTLDDVPLISKCGTYPPE). Asn37 and Asn41 each carry an N-linked (GlcNAc...) asparagine glycan. The helical transmembrane segment at 76-96 (SCLFSLIGNMGAVMVALICLL) threads the bilayer. Topologically, residues 97 to 108 (RYGQLLEQSRHS) are cytoplasmic. The helical transmembrane segment at 109 to 129 (WINTTALITGCTNAAGLVVVG) threads the bilayer. Over 130-140 (NFQVDHAKSLH) the chain is Extracellular. Residues 141–161 (YIGTGVAFTAGLLFVCLHCVL) traverse the membrane as a helical segment. Residues 162 to 178 (FYHGATTPLDMAMAYLR) lie on the Cytoplasmic side of the membrane. Residues 179–199 (SVLAVIAFITLVLSGVFFLHE) traverse the membrane as a helical segment. The Extracellular portion of the chain corresponds to 200–211 (SSQLQHGAALCE). A helical membrane pass occupies residues 212–232 (WVFVLDILIFYGTFSYEFGTI). Topologically, residues 233 to 271 (SSDTLVAALQPAPGRACKSSGSSSTSTHLNCAPESIAMI) are cytoplasmic.

The protein belongs to the DRAM/TMEM150 family. In terms of assembly, interacts (via C-terminal cytoplasmic tail) with PI4KA.

The protein localises to the cell membrane. Functionally, regulates localization of phosphatidylinositol 4-kinase (PI4K) to the plasma membrane, possibly by reducing the association of TTC7 (TTC7A or TTC7B) with the PI4K complex. Acts as a regulator of phosphatidylinositol 4-phosphate (PtdIns(4)P) synthesis. May also play a role in fasting-induced catabolism. The polypeptide is Transmembrane protein 150A (Tmem150a) (Mus musculus (Mouse)).